A 361-amino-acid chain; its full sequence is Chorismate synthase (361 aa).

Position 48 (Arg-48) interacts with NADP(+). FMN-binding positions include 126–128 (RFS), Gly-286, 301–305 (KPTPS), and Arg-328.

The protein belongs to the chorismate synthase family. FMNH2 serves as cofactor.

The catalysed reaction is 5-O-(1-carboxyvinyl)-3-phosphoshikimate = chorismate + phosphate. It participates in metabolic intermediate biosynthesis; chorismate biosynthesis; chorismate from D-erythrose 4-phosphate and phosphoenolpyruvate: step 7/7. Its function is as follows. Catalyzes the anti-1,4-elimination of the C-3 phosphate and the C-6 proR hydrogen from 5-enolpyruvylshikimate-3-phosphate (EPSP) to yield chorismate, which is the branch point compound that serves as the starting substrate for the three terminal pathways of aromatic amino acid biosynthesis. This reaction introduces a second double bond into the aromatic ring system. The polypeptide is Chorismate synthase (Korarchaeum cryptofilum (strain OPF8)).